Here is a 116-residue protein sequence, read N- to C-terminus: T cell receptor alpha variable 19 (116 aa).

The signal sequence occupies residues 1 to 21 (MLTASLLRAVIASICVVSSMA). One can recognise an Ig-like domain in the interval 22–116 (QKVTQAQTEI…SAVYFCALSE (95 aa)). A disulfide bond links Cys-43 and Cys-112. Residue Asn-96 is glycosylated (N-linked (GlcNAc...) asparagine).

As to quaternary structure, alpha-beta TR is a heterodimer composed of an alpha and beta chain; disulfide-linked. The alpha-beta TR is associated with the transmembrane signaling CD3 coreceptor proteins to form the TR-CD3 (TcR or TCR). The assembly of alpha-beta TR heterodimers with CD3 occurs in the endoplasmic reticulum where a single alpha-beta TR heterodimer associates with one CD3D-CD3E heterodimer, one CD3G-CD3E heterodimer and one CD247 homodimer forming a stable octameric structure. CD3D-CD3E and CD3G-CD3E heterodimers preferentially associate with TR alpha and TR beta chains, respectively. The association of the CD247 homodimer is the last step of TcR assembly in the endoplasmic reticulum and is required for transport to the cell surface.

It is found in the cell membrane. In terms of biological role, v region of the variable domain of T cell receptor (TR) alpha chain that participates in the antigen recognition. Alpha-beta T cell receptors are antigen specific receptors which are essential to the immune response and are present on the cell surface of T lymphocytes. Recognize peptide-major histocompatibility (MH) (pMH) complexes that are displayed by antigen presenting cells (APC), a prerequisite for efficient T cell adaptive immunity against pathogens. Binding of alpha-beta TR to pMH complex initiates TR-CD3 clustering on the cell surface and intracellular activation of LCK that phosphorylates the ITAM motifs of CD3G, CD3D, CD3E and CD247 enabling the recruitment of ZAP70. In turn ZAP70 phosphorylates LAT, which recruits numerous signaling molecules to form the LAT signalosome. The LAT signalosome propagates signal branching to three major signaling pathways, the calcium, the mitogen-activated protein kinase (MAPK) kinase and the nuclear factor NF-kappa-B (NF-kB) pathways, leading to the mobilization of transcription factors that are critical for gene expression and essential for T cell growth and differentiation. The T cell repertoire is generated in the thymus, by V-(D)-J rearrangement. This repertoire is then shaped by intrathymic selection events to generate a peripheral T cell pool of self-MH restricted, non-autoaggressive T cells. Post-thymic interaction of alpha-beta TR with the pMH complexes shapes TR structural and functional avidity. The protein is T cell receptor alpha variable 19 of Homo sapiens (Human).